The following is a 266-amino-acid chain: Putative carbamate hydrolase RutD (266 aa).

This sequence belongs to the AB hydrolase superfamily. Hydrolase RutD family.

The catalysed reaction is carbamate + 2 H(+) = NH4(+) + CO2. Functionally, involved in pyrimidine catabolism. May facilitate the hydrolysis of carbamate, a reaction that can also occur spontaneously. The polypeptide is Putative carbamate hydrolase RutD (Escherichia coli (strain B / BL21-DE3)).